A 382-amino-acid chain; its full sequence is MSLKEKTQSLFANAFGYPATHTIQAPGRVNLIGEHTDYNDGFVLPCAIDYQTVISCAPRDDRKVRVMAADYENQLDEFSLDAPIVAHENYQWANYVRGVVKHLQLRNNSFGGVDMVISGNVPQGAGLSSSASLEVAVGTVLQQLYHLPLDGAQIALNGQEAENQFVGCNCGIMDQLISALGKKDHALLIDCRSLGTKAVSMPKGVAVVIINSNFKRTLVGSEYNTRREQCETGARFFQQPALRDVTIEEFNAVAHELDPIVAKRVRHILTENARTVEAASALEQGDLKRMGELMAESHASMRDDFEITVPQIDTLVEIVKAVIGDKGGVRMTGGGFGGCIVALFPEELVPAVQQAVAEQYEAKTGIKETFYVCKPSQGAGQC.

34–37 contacts substrate; the sequence is EHTD. 124 to 130 is an ATP binding site; the sequence is GAGLSSS. Residues S130 and E162 each coordinate Mg(2+). Catalysis depends on D174, which acts as the Proton acceptor. Residue Y223 participates in substrate binding.

The protein belongs to the GHMP kinase family. GalK subfamily.

It is found in the cytoplasm. It catalyses the reaction alpha-D-galactose + ATP = alpha-D-galactose 1-phosphate + ADP + H(+). Its pathway is carbohydrate metabolism; galactose metabolism. Functionally, catalyzes the transfer of the gamma-phosphate of ATP to D-galactose to form alpha-D-galactose-1-phosphate (Gal-1-P). This is Galactokinase from Escherichia coli O1:K1 / APEC.